Reading from the N-terminus, the 347-residue chain is MTSRVVSPEQNPNDAEMSLRPQSLDDFVGQRQVCENLKVFISAARARGEALDHVLFHGPPGLGKTTLAQIMARELGVGFRATSGPVIQRAGDLAALLTNLEPRDVLFIDEIHRLNPAIEEVLYPAMEDFQLDLIIGEGPAARSVRIELPPFTLVGATTRSGLLTTPLRERFGIPCRMNFYEPAELEAIVSRGARVLGFALTPDGAAEVARRSRGTPRVAGRLLRRVRDFAVVAGRSPVDALVADAALNRLEVDRIGLDAMDRRYLRCIAENYGGGPVGVETLAAALSESRDTLEEVVEPYLLQQGMIQRTPRGRMLSASGFKHIGLNPPKDLLVQLDLLTRMDEEGE.

Positions 1–180 (MTSRVVSPEQ…FGIPCRMNFY (180 aa)) are large ATPase domain (RuvB-L). ATP contacts are provided by residues Leu-19, Arg-20, Gly-61, Lys-64, Thr-65, Thr-66, 127–129 (EDF), Arg-170, Tyr-180, and Arg-217. Position 65 (Thr-65) interacts with Mg(2+). The tract at residues 181-251 (EPAELEAIVS…VADAALNRLE (71 aa)) is small ATPAse domain (RuvB-S). The interval 254–347 (RIGLDAMDRR…LLTRMDEEGE (94 aa)) is head domain (RuvB-H). DNA-binding residues include Arg-290, Arg-309, and Arg-314.

Belongs to the RuvB family. Homohexamer. Forms an RuvA(8)-RuvB(12)-Holliday junction (HJ) complex. HJ DNA is sandwiched between 2 RuvA tetramers; dsDNA enters through RuvA and exits via RuvB. An RuvB hexamer assembles on each DNA strand where it exits the tetramer. Each RuvB hexamer is contacted by two RuvA subunits (via domain III) on 2 adjacent RuvB subunits; this complex drives branch migration. In the full resolvosome a probable DNA-RuvA(4)-RuvB(12)-RuvC(2) complex forms which resolves the HJ.

Its subcellular location is the cytoplasm. It carries out the reaction ATP + H2O = ADP + phosphate + H(+). In terms of biological role, the RuvA-RuvB-RuvC complex processes Holliday junction (HJ) DNA during genetic recombination and DNA repair, while the RuvA-RuvB complex plays an important role in the rescue of blocked DNA replication forks via replication fork reversal (RFR). RuvA specifically binds to HJ cruciform DNA, conferring on it an open structure. The RuvB hexamer acts as an ATP-dependent pump, pulling dsDNA into and through the RuvAB complex. RuvB forms 2 homohexamers on either side of HJ DNA bound by 1 or 2 RuvA tetramers; 4 subunits per hexamer contact DNA at a time. Coordinated motions by a converter formed by DNA-disengaged RuvB subunits stimulates ATP hydrolysis and nucleotide exchange. Immobilization of the converter enables RuvB to convert the ATP-contained energy into a lever motion, pulling 2 nucleotides of DNA out of the RuvA tetramer per ATP hydrolyzed, thus driving DNA branch migration. The RuvB motors rotate together with the DNA substrate, which together with the progressing nucleotide cycle form the mechanistic basis for DNA recombination by continuous HJ branch migration. Branch migration allows RuvC to scan DNA until it finds its consensus sequence, where it cleaves and resolves cruciform DNA. The chain is Holliday junction branch migration complex subunit RuvB from Paramagnetospirillum magneticum (strain ATCC 700264 / AMB-1) (Magnetospirillum magneticum).